Reading from the N-terminus, the 368-residue chain is DNA replication and repair protein RecF (368 aa).

Glycine 30–threonine 37 contributes to the ATP binding site.

The protein belongs to the RecF family.

The protein localises to the cytoplasm. Functionally, the RecF protein is involved in DNA metabolism; it is required for DNA replication and normal SOS inducibility. RecF binds preferentially to single-stranded, linear DNA. It also seems to bind ATP. This chain is DNA replication and repair protein RecF, found in Streptococcus pyogenes serotype M18 (strain MGAS8232).